Consider the following 415-residue polypeptide: MSVQAPSVPDLRQQVHDAARRARSAARGLATLSTDTKDRALRTAADHVLMNTRAILEANEADLDTARSSGTPEAMLDRLALTPARVEGIADGLRQVAGLPDPVGEVLRGRTLPNGLQLRQQRVPLGVVGIVYEGRPNVTVDAFGLTLKSGNAVLLRGSSSAARSNAALVDALRAALATELLDVDAVQLLPSADRASVTHLIQARGLVDVVIPRGGAGLIDAVVRDAQVPTIETGVGNCHVYVHSSADLDTAESIVLNAKTRRPSVCNAAESLLIDAAVADVAVPRLTDALQAAGVTVHIDPTEDELRAEFLSMDIALAIVDGVDGAISHINEYGTGHTEAIVTTDLAAAQRFTERVDAAAVMVNASTAFTDGEQFGFGAEIGISTQKLHARGPMGLPELTSTKWIVWGDGHTRPA.

The protein belongs to the gamma-glutamyl phosphate reductase family.

Its subcellular location is the cytoplasm. The catalysed reaction is L-glutamate 5-semialdehyde + phosphate + NADP(+) = L-glutamyl 5-phosphate + NADPH + H(+). It participates in amino-acid biosynthesis; L-proline biosynthesis; L-glutamate 5-semialdehyde from L-glutamate: step 2/2. In terms of biological role, catalyzes the NADPH-dependent reduction of L-glutamate 5-phosphate into L-glutamate 5-semialdehyde and phosphate. The product spontaneously undergoes cyclization to form 1-pyrroline-5-carboxylate. This Mycolicibacterium gilvum (strain PYR-GCK) (Mycobacterium gilvum (strain PYR-GCK)) protein is Gamma-glutamyl phosphate reductase.